A 494-amino-acid chain; its full sequence is UDP-N-acetylmuramate--L-alanine ligase (494 aa).

Residue Gly-140–Thr-146 participates in ATP binding.

It belongs to the MurCDEF family.

The protein resides in the cytoplasm. It carries out the reaction UDP-N-acetyl-alpha-D-muramate + L-alanine + ATP = UDP-N-acetyl-alpha-D-muramoyl-L-alanine + ADP + phosphate + H(+). Its pathway is cell wall biogenesis; peptidoglycan biosynthesis. In terms of biological role, cell wall formation. This Trichormus variabilis (strain ATCC 29413 / PCC 7937) (Anabaena variabilis) protein is UDP-N-acetylmuramate--L-alanine ligase.